Consider the following 331-residue polypeptide: uncharacterized protein (331 aa).

4 WD repeats span residues 53–92 (KAHT…KSAV), 97–139 (QQST…KLIR), 144–184 (AHND…DSTD), and 300–331 (ASEE…AFRV).

The protein localises to the cytoplasm. It localises to the nucleus. This is an uncharacterized protein from Schizosaccharomyces pombe (strain 972 / ATCC 24843) (Fission yeast).